A 258-amino-acid polypeptide reads, in one-letter code: MKTPHKKATARQQTREIVDDHTLSASMRKKKISQKKQRGRPSSQTRRNIVGCRISHGWKEGDEPITQWKGTVLDQVPINPSLYLVKYDGIDCVYGLELHRDKRILKLKILPDKVPFSRVRDVHLANTIIGKAVEHMFEGEHGSKDGWRGMVLAQAPIMKAWFYITYEKDPVLYMYQLLDDYKEGDLHIMPESSKSSPKEREPEGVIDGLIGKHVEYTKEDGSKRTGKVIHQVKAKPSVYFIKFDDDFHIYVYDLVKKS.

Positions 1–47 are disordered; sequence MKTPHKKATARQQTREIVDDHTLSASMRKKKISQKKQRGRPSSQTRR. The span at 13–22 shows a compositional bias: basic and acidic residues; it reads QTREIVDDHT. Residues 27–39 are compositionally biased toward basic residues; sequence MRKKKISQKKQRG. Tudor-like domain regions lie at residues 50-99, 129-178, and 210-255; these read VGCR…LELH, IGKA…YQLL, and IGKH…YDLV. 2 histone H3K4me3 and H3R8me2a binding regions span residues glutamate 138 and 246–248; that span reads DFH.

It belongs to the SPIN/STSY family. As to quaternary structure, interacts with C11orf84/SPINDOC.

It is found in the nucleus. In terms of biological role, may be involved in the regulation of cell cycle progression. Exhibits H3K4me3-binding activity. This is Spindlin-2 (SPIN2) from Bos taurus (Bovine).